The primary structure comprises 143 residues: Probable prefoldin subunit 2 (143 aa).

It belongs to the prefoldin subunit beta family. Heterohexamer of two PFD-alpha type and four PFD-beta type subunits.

Functionally, binds specifically to cytosolic chaperonin (c-CPN) and transfers target proteins to it. Binds to nascent polypeptide chain and promotes folding in an environment in which there are many competing pathways for nonnative proteins. The protein is Probable prefoldin subunit 2 of Drosophila melanogaster (Fruit fly).